The sequence spans 225 residues: MGNKQGKSPNNSKGGKKYKIDNDVVKQLQESTNFDKVEAKKLYEVFYDLSNGGKEPLNRDRFKEGLTKLESCGLKNLDNSPFGDRLFDLLDTNKDNTVDLQEFISGLSILCKGTAEEKLELSFKAYDIDGNGYITKSELSQMFQQAWISGFKALSYQTNEEVNKDDLNNFSEEMAQIFADGAFSSLDVNGDGKLSFNEFKQFAMSHPKITATLNGSKRDVPITFD.

The span at 1-13 (MGNKQGKSPNNSK) shows a compositional bias: low complexity. The tract at residues 1 to 20 (MGNKQGKSPNNSKGGKKYKI) is disordered. The N-myristoyl glycine moiety is linked to residue G2. EF-hand domains are found at residues 78 to 113 (DNSP…LCKG), 114 to 149 (TAEE…AWIS), and 174 to 209 (MAQI…HPKI). Ca(2+) contacts are provided by D91, N93, D95, T97, E102, D127, D129, N131, Y133, E138, D187, N189, D191, K193, and E198.

The protein belongs to the recoverin family.

This is Recoverin family protein DDB_G0274781 from Dictyostelium discoideum (Social amoeba).